The following is a 97-amino-acid chain: Coiled-coil domain-containing protein 167 (97 aa).

Residues 10-79 are a coiled coil; that stretch reads GVALEIDGLE…LRQENRKNML (70 aa). A helical membrane pass occupies residues 77–97; sequence NMLLSVAIFLLLTVIYAYWAL.

The protein resides in the membrane. In Bos taurus (Bovine), this protein is Coiled-coil domain-containing protein 167 (CCDC167).